A 699-amino-acid polypeptide reads, in one-letter code: Nucleolar and coiled-body phosphoprotein 1 (699 aa).

Residues V10–Q42 form the LisH domain. Residue K33 is modified to N6-acetyllysine. A disordered region spans residues E65 to S637. Glycyl lysine isopeptide (Lys-Gly) (interchain with G-Cter in SUMO2) cross-links involve residues K67 and K76. The stretch at S84–E95 is one Acidic serine cluster 1 repeat. The 11 X 12 AA approximate repeats of an acidic serine cluster stretch occupies residues S84–E566. Positions D86–V97 are enriched in acidic residues. Residues S87, S90, and S91 each carry the phosphoserine modification. S91 is subject to Diphosphoserine. The span at P100–K110 shows a compositional bias: low complexity. An Acidic serine cluster 2 repeat occupies E125 to D136. Residues Q144–A159 show a composition bias toward low complexity. One copy of the Acidic serine cluster 3 repeat lies at S167 to E178. K186 participates in a covalent cross-link: Glycyl lysine isopeptide (Lys-Gly) (interchain with G-Cter in SUMO2). The residue at position 188 (T188) is a Phosphothreonine. A Glycyl lysine isopeptide (Lys-Gly) (interchain with G-Cter in SUMO2) cross-link involves residue K193. 2 stretches are compositionally biased toward low complexity: residues K193–S227 and A236–T261. The segment at R204–G382 is interaction with RPA194. The Acidic serine cluster 4 repeat unit spans residues S221–E232. The Acidic serine cluster 5 repeat unit spans residues S264–E275. A compositionally biased stretch (pro residues) spans S291–K301. Over residues S321–S333 the composition is skewed to acidic residues. The stretch at S325–E336 is one Acidic serine cluster 6 repeat. Glycyl lysine isopeptide (Lys-Gly) (interchain with G-Cter in SUMO2) cross-links involve residues K342 and K347. 3 positions are modified to phosphoserine: S362, S363, and S366. The stretch at S363–E375 is one Acidic serine cluster 7 repeat. A compositionally biased stretch (acidic residues) spans S366–E375. Residues A381–S397 are compositionally biased toward polar residues. Glycyl lysine isopeptide (Lys-Gly) (interchain with G-Cter in SUMO2) cross-links involve residues K390 and K396. S397 is subject to Phosphoserine. A compositionally biased stretch (low complexity) spans P398–P409. Glycyl lysine isopeptide (Lys-Gly) (interchain with G-Cter in SUMO2) cross-links involve residues K401 and K407. The residue at position 415 (K415) is an N6-acetyllysine; alternate. K415 is covalently cross-linked (Glycyl lysine isopeptide (Lys-Gly) (interchain with G-Cter in SUMO1); alternate). A Glycyl lysine isopeptide (Lys-Gly) (interchain with G-Cter in SUMO2); alternate cross-link involves residue K415. The stretch at S425 to E436 is one Acidic serine cluster 8 repeat. Residues K440 and K452 each participate in a glycyl lysine isopeptide (Lys-Gly) (interchain with G-Cter in SUMO2) cross-link. 2 stretches are compositionally biased toward low complexity: residues M441–S476 and A498–D523. S456 is subject to Phosphoserine. An Acidic serine cluster 9 repeat occupies S470–E481. K505 is covalently cross-linked (Glycyl lysine isopeptide (Lys-Gly) (interchain with G-Cter in SUMO2)). S508 carries the phosphoserine modification. The stretch at S519–E529 is one Acidic serine cluster 10 repeat. Phosphoserine is present on S538. Positions N547–N556 are enriched in polar residues. Residues Q555–E566 form an Acidic serine cluster 11 repeat. A Phosphoserine modification is found at S563. A Glycyl lysine isopeptide (Lys-Gly) (interchain with G-Cter in SUMO1) cross-link involves residue K572. A Glycyl lysine isopeptide (Lys-Gly) (interchain with G-Cter in SUMO2) cross-link involves residue K579. Phosphoserine occurs at positions 580 and 582. A Glycyl lysine isopeptide (Lys-Gly) (interchain with G-Cter in SUMO2) cross-link involves residue K604. 2 positions are modified to phosphothreonine: T607 and T610. Residue K613 forms a Glycyl lysine isopeptide (Lys-Gly) (interchain with G-Cter in SUMO2) linkage. Residue S622 is modified to Phosphoserine. Positions R627–S637 are enriched in basic and acidic residues. S643 bears the Phosphoserine mark. K647 is covalently cross-linked (Glycyl lysine isopeptide (Lys-Gly) (interchain with G-Cter in SUMO2)). Position 663 is an N6-acetyllysine; alternate (K663). K663 participates in a covalent cross-link: Glycyl lysine isopeptide (Lys-Gly) (interchain with G-Cter in SUMO2); alternate. Residue R683 is modified to Omega-N-methylarginine. Position 686 is a phosphoserine (S686). A Glycyl lysine isopeptide (Lys-Gly) (interchain with G-Cter in SUMO2) cross-link involves residue K695. S698 carries the post-translational modification Phosphoserine.

Belongs to the NOLC1 family. Heterodimer; heterodimerizes with TCOF1 following monoubiquitination. Interacts with RNA polymerase I 194 kDa subunit (RPA194) and with casein kinase-II. Interacts with DKC1/NAP57, NOP58 and fibrillarin. Undergoes rapid and massive phosphorylation/dephosphorylation cycles on CK2 and PKC sites. NOLC1 is one of the mostly phosphorylated proteins in the cell. In terms of processing, ubiquitinated. Monoubiquitination by the BCR(KBTBD8) complex promotes the formation of a NOLC1-TCOF1 complex that acts as a platform to connect RNA polymerase I with enzymes responsible for ribosomal processing and modification, leading to remodel the translational program of differentiating cells in favor of neural crest specification. Post-translationally, pyrophosphorylated by 5-diphosphoinositol pentakisphosphate (5-IP7). Serine pyrophosphorylation is achieved by Mg(2+)-dependent, but enzyme independent transfer of a beta-phosphate from a inositol pyrophosphate to a pre-phosphorylated serine residue.

Its subcellular location is the nucleus. The protein resides in the nucleolus. It is found in the cytoplasm. Nucleolar protein that acts as a regulator of RNA polymerase I by connecting RNA polymerase I with enzymes responsible for ribosomal processing and modification. Required for neural crest specification: following monoubiquitination by the BCR(KBTBD8) complex, associates with TCOF1 and acts as a platform to connect RNA polymerase I with enzymes responsible for ribosomal processing and modification, leading to remodel the translational program of differentiating cells in favor of neural crest specification. Involved in nucleologenesis, possibly by playing a role in the maintenance of the fundamental structure of the fibrillar center and dense fibrillar component in the nucleolus. It has intrinsic GTPase and ATPase activities. The sequence is that of Nucleolar and coiled-body phosphoprotein 1 from Homo sapiens (Human).